We begin with the raw amino-acid sequence, 127 residues long: Movement protein TGB2 (127 aa).

At 1-24 the chain is on the cytoplasmic side; the sequence is MSLSHGTGAPAISTPLTLRPPPDN. The helical transmembrane segment at 25 to 45 threads the bilayer; sequence TKAILTIAIGIAASLVFFMLT. Over 46–85 the chain is Lumenal; it reads RNNLPHVGDNIHSLPHGGSYIDGTKSINYRPPASRYPSSN. Residues 86 to 106 traverse the membrane as a helical segment; the sequence is LLAFAPPILAAVLFFLTQPYL. At 107–127 the chain is on the cytoplasmic side; the sequence is ATRRSRCVRCFVVHGACTNHT.

The protein belongs to the Tymovirales TGBp2 protein family.

The protein localises to the host endoplasmic reticulum membrane. In terms of biological role, plays a role in viral cell-to-cell propagation, by facilitating genome transport to neighboring plant cells through plasmosdesmata,. In Setaria italica (Foxtail millet), this protein is Movement protein TGB2.